The following is a 203-amino-acid chain: Suppressor/enhancer of lin-12 protein 9 (203 aa).

The signal sequence occupies residues 1–18 (MNSLTWILAVLFVTPAAS). Topologically, residues 19–170 (YFIHVDANEE…RNINENTNSR (152 aa)) are lumenal. Positions 28 to 110 (EQCFFDRLTS…PKAVMFTVEI (83 aa)) constitute a GOLD domain. The helical transmembrane segment at 171 to 191 (VVMWAAFEAFVLVGMTVGQIF) threads the bilayer. The Cytoplasmic portion of the chain corresponds to 192–203 (YLKRFFEVRTMV).

Belongs to the EMP24/GP25L family.

The protein resides in the cytoplasmic vesicle membrane. Its subcellular location is the cytoplasmic vesicle. It localises to the COPI-coated vesicle membrane. The protein localises to the golgi apparatus membrane. May have a role in the negative regulation of lin-12 and glp-1 transport to the cell surface. May also have a role in a quality control mechanism for endoplasmic reticulum-Golgi transport; the budding of coatomer-coated and other species of coated vesicles, could bind cargo molecules to collect them into budding vesicles. Involved in regulating the expression of proteasomal subunits such as rpt-3 in order to confer resistance to proteasomal dysfunction. This Caenorhabditis elegans protein is Suppressor/enhancer of lin-12 protein 9 (sel-9).